The chain runs to 92 residues: Small ribosomal subunit protein uS19 (92 aa).

The protein belongs to the universal ribosomal protein uS19 family.

Protein S19 forms a complex with S13 that binds strongly to the 16S ribosomal RNA. This Bacillus licheniformis (strain ATCC 14580 / DSM 13 / JCM 2505 / CCUG 7422 / NBRC 12200 / NCIMB 9375 / NCTC 10341 / NRRL NRS-1264 / Gibson 46) protein is Small ribosomal subunit protein uS19.